Consider the following 134-residue polypeptide: Orexigenic neuropeptide QRFP (134 aa).

The signal sequence occupies residues methionine 1–cysteine 18. A propeptide spanning residues phenylalanine 19–arginine 88 is cleaved from the precursor. Phenylalanine amide is present on phenylalanine 131.

The protein belongs to the RFamide neuropeptide family. As to quaternary structure, ligand for the G-protein coupled receptor QRFPR/GPR103. As to expression, expressed in the hypothalamus.

The protein resides in the secreted. Functionally, stimulates feeding behavior, metabolic rate and locomotor activity and increases blood pressure. May have orexigenic activity. May promote aldosterone secretion by the adrenal gland. The protein is Orexigenic neuropeptide QRFP of Bos taurus (Bovine).